The following is a 504-amino-acid chain: Maturase K (504 aa).

It belongs to the intron maturase 2 family. MatK subfamily.

Its subcellular location is the plastid. The protein localises to the chloroplast. Usually encoded in the trnK tRNA gene intron. Probably assists in splicing its own and other chloroplast group II introns. This is Maturase K from Aruncus dioicus (Goat's beard).